A 123-amino-acid chain; its full sequence is Phospholipase A2 (123 aa).

7 disulfides stabilise this stretch: C11–C77, C27–C123, C29–C45, C44–C105, C51–C98, C61–C91, and C84–C96. The Ca(2+) site is built by Y28, G30, and G32. H48 is a catalytic residue. Position 49 (D49) interacts with Ca(2+). D99 is a catalytic residue.

This sequence belongs to the phospholipase A2 family. Monomer or homodimer. Ca(2+) serves as cofactor. Post-translationally, activated by trypsin cleavage in the duodenum. Can also be activated by thrombin or autocatalytically.

The protein localises to the secreted. It carries out the reaction a 1,2-diacyl-sn-glycero-3-phosphocholine + H2O = a 1-acyl-sn-glycero-3-phosphocholine + a fatty acid + H(+). It catalyses the reaction 1,2-ditetradecanoyl-sn-glycero-3-phosphocholine + H2O = 1-tetradecanoyl-sn-glycero-3-phosphocholine + tetradecanoate + H(+). The catalysed reaction is 1,2-dihexadecanoyl-sn-glycero-3-phosphocholine + H2O = 1-hexadecanoyl-sn-glycero-3-phosphocholine + hexadecanoate + H(+). The enzyme catalyses 1-hexadecanoyl-2-(9Z-octadecenoyl)-sn-glycero-3-phosphocholine + H2O = 1-hexadecanoyl-sn-glycero-3-phosphocholine + (9Z)-octadecenoate + H(+). It carries out the reaction 1-hexadecanoyl-2-(5Z,8Z,11Z,14Z-eicosatetraenoyl)-sn-glycero-3-phosphocholine + H2O = 1-hexadecanoyl-sn-glycero-3-phosphocholine + (5Z,8Z,11Z,14Z)-eicosatetraenoate + H(+). It catalyses the reaction 1-hexadecanoyl-2-(9Z-octadecenoyl)-sn-glycero-3-phospho-(1'-sn-glycerol) + H2O = 1-hexadecanoyl-sn-glycero-3-phospho-(1'-sn-glycerol) + (9Z)-octadecenoate + H(+). The catalysed reaction is N-hexadecanoyl-1,2-di-(9Z-octadecenoyl)-sn-glycero-3-phosphoethanolamine + H2O = N-hexadecanoyl-1-(9Z-octadecenoyl)-sn-glycero-3-phosphoethanolamine + (9Z)-octadecenoate + H(+). The enzyme catalyses 1-hexadecanoyl-2-(9Z,12Z-octadecadienoyl)-sn-glycero-3-phosphoethanolamine + H2O = 1-hexadecanoyl-sn-glycero-3-phosphoethanolamine + (9Z,12Z)-octadecadienoate + H(+). It carries out the reaction N,1-dihexadecanoyl-2-(9Z,12Z-octadecadienoyl)-sn-glycero-3-phosphoethanolamine + H2O = N,1-dihexadecanoyl-sn-glycero-3-phosphoethanolamine + (9Z,12Z)-octadecadienoate + H(+). Its function is as follows. Secretory calcium-dependent phospholipase A2 that primarily targets dietary phospholipids in the intestinal tract. Hydrolyzes the ester bond of the fatty acyl group attached at sn-2 position of phospholipids (phospholipase A2 activity) with preference for phosphatidylethanolamines and phosphatidylglycerols over phosphatidylcholines. May play a role in the biosynthesis of N-acyl ethanolamines that regulate energy metabolism and inflammation in the intestinal tract. Hydrolyzes N-acyl phosphatidylethanolamines to N-acyl lysophosphatidylethanolamines, which are further cleaved by a lysophospholipase D to release N-acyl ethanolamines. May act in an autocrine and paracrine manner. Has anti-helminth activity in a process regulated by gut microbiota. Upon helminth infection of intestinal epithelia, directly affects phosphatidylethanolamine contents in the membrane of helminth larvae, likely controlling an array of phospholipid-mediated cellular processes such as membrane fusion and cell division while providing for better immune recognition, ultimately reducing larvae integrity and infectivity. The protein is Phospholipase A2 (PLA2G1B) of Ovis aries (Sheep).